The chain runs to 111 residues: MNNLAEKKCIPCSLGTPPLSSDEIKRYISQLHEEWKVINDHHLEREFKFKNFKEALSYTNVIGQLAEKEGHHPDMLLSWGKVKITLFTHKIDGLSESDFVFAAKVDKQQSE.

It belongs to the pterin-4-alpha-carbinolamine dehydratase family.

The enzyme catalyses (4aS,6R)-4a-hydroxy-L-erythro-5,6,7,8-tetrahydrobiopterin = (6R)-L-erythro-6,7-dihydrobiopterin + H2O. This chain is Putative pterin-4-alpha-carbinolamine dehydratase, found in Alkaliphilus metalliredigens (strain QYMF).